We begin with the raw amino-acid sequence, 117 residues long: Appetite-regulating hormone (117 aa).

An N-terminal signal peptide occupies residues 1 to 23 (MPSPGTVCSLLLLGMLWLDLAMA). The O-decanoyl serine; alternate moiety is linked to residue S26. The O-hexanoyl serine; alternate moiety is linked to residue S26. A lipid anchor (O-octanoyl serine; alternate) is attached at S26. Residues 29–67 (SPEHQRAQQRKESKKPPAKLQPRALGGWLRPEDGDQAEG) form a disordered region. Basic and acidic residues predominate over residues 31-43 (EHQRAQQRKESKK). Residues 52–75 (ALGGWLRPEDGDQAEGAEDELEIQ) constitute a propeptide, removed in mature form. L98 carries the leucine amide modification. Positions 99 to 117 (GKFLQDILWEEAKEAPADK) are cleaved as a propeptide — removed in mature form.

The protein belongs to the motilin family. Post-translationally, O-octanoylated by GOAT/MBOAT4. O-octanoylation is essential for ghrelin activity. In terms of processing, amidation of Leu-98 is essential for obestatin activity.

It is found in the secreted. Functionally, ghrelin is the ligand for growth hormone secretagogue receptor type 1 (GHSR). Induces the release of growth hormone from the pituitary. Has an appetite-stimulating effect, induces adiposity and stimulates gastric acid secretion. Involved in growth regulation. In terms of biological role, obestatin may be the ligand for GPR39. May have an appetite-reducing effect resulting in decreased food intake. May reduce gastric emptying activity and jejunal motility. This Papio hamadryas (Hamadryas baboon) protein is Appetite-regulating hormone (GHRL).